Here is a 171-residue protein sequence, read N- to C-terminus: MAEKRNIFLVGPMGAGKSTIGRHLAQMLHLEFHDSDQEIEQRTGADIAWVFDVEGEEGFRRREAQVIADLSEKQGIVLATGGGSVQSKDIRNHLSARGIVVYLETTIDKQVARTQRDKRRPLLQVDDPREVLESLAEIRNPLYEEIADVVVKTDDQSAKVVANQIIEKLGF.

An ATP-binding site is contributed by 14-19 (GAGKST). Serine 18 contacts Mg(2+). The substrate site is built by aspartate 36, arginine 60, and glycine 82. Arginine 120 serves as a coordination point for ATP. Arginine 139 contacts substrate. Glutamine 156 is an ATP binding site.

It belongs to the shikimate kinase family. In terms of assembly, monomer. It depends on Mg(2+) as a cofactor.

It is found in the cytoplasm. The enzyme catalyses shikimate + ATP = 3-phosphoshikimate + ADP + H(+). It participates in metabolic intermediate biosynthesis; chorismate biosynthesis; chorismate from D-erythrose 4-phosphate and phosphoenolpyruvate: step 5/7. Catalyzes the specific phosphorylation of the 3-hydroxyl group of shikimic acid using ATP as a cosubstrate. This Shewanella oneidensis (strain ATCC 700550 / JCM 31522 / CIP 106686 / LMG 19005 / NCIMB 14063 / MR-1) protein is Shikimate kinase.